The following is a 234-amino-acid chain: MNILKILILLELIYTCVSGLSFTVTSKIYMDVKHQKKPLGRIVFGLFGKRAPKTVTNFRHICLRGINGTTYVGSEFHRVISRFLIQGGDIVNNDGTGSTSIYGDFFQDEALDVEHLRPGYLGMANRGPDTNGCQFYVTTVAAQWLNGKHTVFGKVIEGMDTVYAIEDVKTDTDDHPIDPVIIVNCGEMPTEPYEFYPDDFSILGWIKAAGLPFCSSFIVLMIFHYFFRQLNMYC.

The signal sequence occupies residues 1–19 (MNILKILILLELIYTCVSG). The PPIase cyclophilin-type domain maps to 29-187 (YMDVKHQKKP…DPVIIVNCGE (159 aa)). Asn67 is a glycosylation site (N-linked (GlcNAc...) asparagine). The chain crosses the membrane as a helical span at residues 202–222 (ILGWIKAAGLPFCSSFIVLMI).

The protein belongs to the cyclophilin-type PPIase family. As to expression, expressed specifically in photoreceptor cells.

It is found in the membrane. The enzyme catalyses [protein]-peptidylproline (omega=180) = [protein]-peptidylproline (omega=0). Functionally, PPIases accelerate the folding of proteins. It catalyzes the cis-trans isomerization of proline imidic peptide bonds in oligopeptides. Acts on the folding of rhodopsin RH1 and RH2 (but not RH3) and is required for visual transduction. This is Peptidyl-prolyl cis-trans isomerase, rhodopsin-specific isozyme (NINAA) from Calliphora vicina (Blue blowfly).